Consider the following 221-residue polypeptide: PKHD-type hydroxylase PMT9312_1262 (221 aa).

In terms of domain architecture, Fe2OG dioxygenase spans 80-174 (IIHGIMFTKS…RLVCVGWIES (95 aa)). His98, Asp100, and His155 together coordinate Fe cation. 2-oxoglutarate is bound at residue Arg165.

Fe(2+) is required as a cofactor. It depends on L-ascorbate as a cofactor.

The protein is PKHD-type hydroxylase PMT9312_1262 of Prochlorococcus marinus (strain MIT 9312).